The sequence spans 247 residues: MDVLSCSINTLKGLYDISGVEVGQHFYWQIGDFLVHGQVLITSWVVIAILLGSATVAVRNPQTIPTGGQNFFEYVLEFIRDVSKTQIGEEYGPWVPFIGTMFLFIFVSNWSGALLPWKILQLPHGELAAPTNDINTTVALALLTSAAYFYAGILKKGLGYFEKYIKPTPILLPINILEDFTKPLSLSFRLFGNILADELVVVVLVSLVPSVVPIPVMLLGLFTSGIQALIFATLAAAYIGESMEGHL.

5 helical membrane-spanning segments follow: residues 33-53 (FLVH…LLGS), 95-115 (VPFI…GALL), 134-154 (INTT…AGIL), 199-219 (LVVV…VMLL), and 220-240 (GLFT…AYIG).

It belongs to the ATPase A chain family. F-type ATPases have 2 components, CF(1) - the catalytic core - and CF(0) - the membrane proton channel. CF(1) has five subunits: alpha(3), beta(3), gamma(1), delta(1), epsilon(1). CF(0) has four main subunits: a, b, b' and c.

The protein resides in the plastid membrane. Key component of the proton channel; it plays a direct role in the translocation of protons across the membrane. The chain is ATP synthase subunit a, plastid from Cuscuta exaltata (Tall dodder).